The sequence spans 403 residues: Glutamyl-tRNA reductase 2 (403 aa).

Substrate contacts are provided by residues 47-50 (TCHR), Ser-98, 103-105 (ETD), and Gln-109. Cys-48 (nucleophile) is an active-site residue. Residue 177 to 182 (GAGAVG) coordinates NADP(+).

It belongs to the glutamyl-tRNA reductase family. In terms of assembly, homodimer.

The catalysed reaction is (S)-4-amino-5-oxopentanoate + tRNA(Glu) + NADP(+) = L-glutamyl-tRNA(Glu) + NADPH + H(+). The protein operates within porphyrin-containing compound metabolism; protoporphyrin-IX biosynthesis; 5-aminolevulinate from L-glutamyl-tRNA(Glu): step 1/2. Its function is as follows. Catalyzes the NADPH-dependent reduction of glutamyl-tRNA(Glu) to glutamate 1-semialdehyde (GSA). In Pyrobaculum arsenaticum (strain DSM 13514 / JCM 11321 / PZ6), this protein is Glutamyl-tRNA reductase 2.